The following is a 449-amino-acid chain: Nucleoporin NUP42 (449 aa).

The segment at 1 to 25 (MAICSFFLQGRCRYGEKCWNEHPRG) adopts a C3H1-type zinc-finger fold. Disordered regions lie at residues 22–84 (HPRG…GFDN) and 218–237 (DMTS…SSFP). Composition is skewed to polar residues over residues 47–83 (WGSS…SGFD) and 218–227 (DMTSGYNGQQ). FG repeat units follow at residues 231 to 232 (FG), 274 to 275 (FG), 284 to 285 (FG), 305 to 306 (FG), 314 to 315 (FG), 335 to 336 (FG), and 347 to 348 (FG).

Probable component of the nuclear pore complex (NPC).

It is found in the nucleus. The protein resides in the nuclear pore complex. Its subcellular location is the nucleus membrane. Required for the export of mRNAs containing poly(A) tails from the nucleus into the cytoplasm. The protein is Nucleoporin NUP42 (nup42) of Xenopus tropicalis (Western clawed frog).